Here is a 119-residue protein sequence, read N- to C-terminus: Large ribosomal subunit protein uL18 (119 aa).

The protein belongs to the universal ribosomal protein uL18 family. As to quaternary structure, part of the 50S ribosomal subunit; part of the 5S rRNA/L5/L18/L25 subcomplex. Contacts the 5S and 23S rRNAs.

Functionally, this is one of the proteins that bind and probably mediate the attachment of the 5S RNA into the large ribosomal subunit, where it forms part of the central protuberance. This Oceanobacillus iheyensis (strain DSM 14371 / CIP 107618 / JCM 11309 / KCTC 3954 / HTE831) protein is Large ribosomal subunit protein uL18.